The following is a 367-amino-acid chain: DNA replication and repair protein RecF (367 aa).

ATP is bound at residue 30–37; it reads GANGSGKT.

It belongs to the RecF family.

Its subcellular location is the cytoplasm. Its function is as follows. The RecF protein is involved in DNA metabolism; it is required for DNA replication and normal SOS inducibility. RecF binds preferentially to single-stranded, linear DNA. It also seems to bind ATP. The sequence is that of DNA replication and repair protein RecF from Pseudomonas entomophila (strain L48).